The sequence spans 413 residues: Protein SLX4IP (413 aa).

Glycyl lysine isopeptide (Lys-Gly) (interchain with G-Cter in SUMO2) cross-links involve residues lysine 61, lysine 79, lysine 167, lysine 176, and lysine 236. Disordered stretches follow at residues 172 to 193 (RTKS…VGRS) and 228 to 300 (SHQE…GSVE). Over residues 238-254 (ENVSQTQPGDTRSQQQL) the composition is skewed to polar residues. Residues lysine 288, lysine 344, and lysine 353 each participate in a glycyl lysine isopeptide (Lys-Gly) (interchain with G-Cter in SUMO2) cross-link. The interval 363–413 (SSRHLVTNNPGQAQQSDSAAITEQLATDQGGPSKKRKKLQSYNRGCSGKKN) is disordered. The span at 364 to 389 (SRHLVTNNPGQAQQSDSAAITEQLAT) shows a compositional bias: polar residues. Threonine 389 carries the post-translational modification Phosphothreonine. A Glycyl lysine isopeptide (Lys-Gly) (interchain with G-Cter in SUMO2) cross-link involves residue lysine 396.

This sequence belongs to the SLX4IP family. Interacts with SLX4/BTBD12; subunit of different structure-specific endonucleases.

The protein is Protein SLX4IP (Slx4ip) of Mus musculus (Mouse).